The primary structure comprises 2521 residues: Partially reducing polyketide synthase tpeA (2521 aa).

Residues 7-434 (DQSIAVIGLS…GSNAHAIIDN (428 aa)) form the Ketosynthase family 3 (KS3) domain. The segment at 47–66 (RWNSRRFQDDKNHSQNTSRT) is disordered. Residues Cys-180, His-315, and His-357 each act as for beta-ketoacyl synthase activity in the active site. The Malonyl-CoA:ACP transacylase (MAT) domain occupies 554 to 855 (YVFTGQGAQW…LRGPVTQILQ (302 aa)). The N-terminal hotdog fold stretch occupies residues 948 to 1088 (SSFIGLPMPS…GLVTVEFEQL (141 aa)). The 311-residue stretch at 948-1258 (SSFIGLPMPS…CVEMPSTAGV (311 aa)) folds into the PKS/mFAS DH domain. The dehydratase (DH) domain stretch occupies residues 949-1256 (SFIGLPMPSF…LTCVEMPSTA (308 aa)). Residues 1100–1258 (TTVQQAEAFY…CVEMPSTAGV (159 aa)) are C-terminal hotdog fold. The 313-residue stretch at 1809–2121 (GMLNTLCFQA…DNRHHGKITL (313 aa)) folds into the Enoyl reductase (ER) domain. A Ketoreductase (KR) domain is found at 2146–2323 (TYLIAGGLGG…AVTIDLGIVK (178 aa)). One can recognise a Carrier domain in the interval 2433-2510 (DAVLFVTGAV…SFARDLVGKG (78 aa)). Ser-2470 carries the O-(pantetheine 4'-phosphoryl)serine modification.

Requires pantetheine 4'-phosphate as cofactor.

It functions in the pathway secondary metabolite biosynthesis. In terms of biological role, partially reducing polyketide synthase; part of the gene cluster that mediates the biosynthesis of polyesters containing 2,4-dihydroxy-6-(2-hydroxypropyl)benzoate and 3-hydroxybutyrate moieties, such as talapolyester G, 15G256beta and 15G256beta-2; as well as to oxidized derivatives such as 15G256alpha. The biosynthesis of the polyesters probably starts with the formation of the diketide 3-hydroxybutyryl-S-ACP catalyzed by the partially reducing polyketide synthase tpeA. The acceptance of 3-hydroxybutyryl by the non-reducing polyketide synthase tpeB would initiate further elongation and cyclization, catalyzed by KS and PT, respectively, to form 2,4-dihydroxy-6-(2-hydroxyn-propyl)benzoyl-S-ACP intermediate. The TE domain could catalyze lactonization at this step to yield 6-hydroxymellein as a derailment product. The polyesterification process maybe occurs when additional molecules of 3-hydroxybutyryl are transferred to tpeB. Following the first esterification step, an intramolecular cyclization catalyzed by the TE domain of tpeB would give talarodioxadione 1, whereas the ethyl esterification of talapolyester G perhaps happens spontaneously. Further oxidation by the cytochrome P450 monooxygenase tpeC then leads to the formation of oxidized derivatives. This chain is Partially reducing polyketide synthase tpeA, found in Talaromyces stipitatus (strain ATCC 10500 / CBS 375.48 / QM 6759 / NRRL 1006) (Penicillium stipitatum).